The primary structure comprises 252 residues: 5'-nucleotidase SurE (252 aa).

4 residues coordinate a divalent metal cation: aspartate 8, aspartate 9, serine 39, and asparagine 91.

The protein belongs to the SurE nucleotidase family. A divalent metal cation is required as a cofactor.

It localises to the cytoplasm. The enzyme catalyses a ribonucleoside 5'-phosphate + H2O = a ribonucleoside + phosphate. In terms of biological role, nucleotidase that shows phosphatase activity on nucleoside 5'-monophosphates. This Variovorax paradoxus (strain S110) protein is 5'-nucleotidase SurE.